Consider the following 673-residue polypeptide: UvrABC system protein B (673 aa).

In terms of domain architecture, Helicase ATP-binding spans 26-183 (EGLEDGLAHQ…RRLAELQYAR (158 aa)). Residue 39–46 (GVTGSGKT) participates in ATP binding. The Beta-hairpin signature appears at 92 to 115 (YYDYYQPEAYVPSSDTFIEKDASV). A Helicase C-terminal domain is found at 431–597 (QVDDLLSEIR…GLNKKVVDIL (167 aa)). The UVR domain maps to 633 to 668 (QQKIHELEGLMMQHAQNLEFEEAAQVRDQLHQLRQL).

It belongs to the UvrB family. In terms of assembly, forms a heterotetramer with UvrA during the search for lesions. Interacts with UvrC in an incision complex.

Its subcellular location is the cytoplasm. Its function is as follows. The UvrABC repair system catalyzes the recognition and processing of DNA lesions. A damage recognition complex composed of 2 UvrA and 2 UvrB subunits scans DNA for abnormalities. Upon binding of the UvrA(2)B(2) complex to a putative damaged site, the DNA wraps around one UvrB monomer. DNA wrap is dependent on ATP binding by UvrB and probably causes local melting of the DNA helix, facilitating insertion of UvrB beta-hairpin between the DNA strands. Then UvrB probes one DNA strand for the presence of a lesion. If a lesion is found the UvrA subunits dissociate and the UvrB-DNA preincision complex is formed. This complex is subsequently bound by UvrC and the second UvrB is released. If no lesion is found, the DNA wraps around the other UvrB subunit that will check the other stand for damage. The chain is UvrABC system protein B from Enterobacter sp. (strain 638).